A 226-amino-acid polypeptide reads, in one-letter code: Ribosome maturation factor RimM (226 aa).

The PRC barrel domain occupies 144–225 (ADEFYWVDLI…RIVVDWEADY (82 aa)).

This sequence belongs to the RimM family. In terms of assembly, binds ribosomal protein uS19.

The protein localises to the cytoplasm. Functionally, an accessory protein needed during the final step in the assembly of 30S ribosomal subunit, possibly for assembly of the head region. Essential for efficient processing of 16S rRNA. May be needed both before and after RbfA during the maturation of 16S rRNA. It has affinity for free ribosomal 30S subunits but not for 70S ribosomes. The polypeptide is Ribosome maturation factor RimM (Burkholderia ambifaria (strain ATCC BAA-244 / DSM 16087 / CCUG 44356 / LMG 19182 / AMMD) (Burkholderia cepacia (strain AMMD))).